The primary structure comprises 294 residues: ATP synthase gamma chain (294 aa).

It belongs to the ATPase gamma chain family. F-type ATPases have 2 components, CF(1) - the catalytic core - and CF(0) - the membrane proton channel. CF(1) has five subunits: alpha(3), beta(3), gamma(1), delta(1), epsilon(1). CF(0) has three main subunits: a, b and c.

The protein localises to the cell membrane. Its function is as follows. Produces ATP from ADP in the presence of a proton gradient across the membrane. The gamma chain is believed to be important in regulating ATPase activity and the flow of protons through the CF(0) complex. In Opitutus terrae (strain DSM 11246 / JCM 15787 / PB90-1), this protein is ATP synthase gamma chain.